A 114-amino-acid chain; its full sequence is UPF0342 protein lp_1415 (114 aa).

This sequence belongs to the UPF0342 family.

The sequence is that of UPF0342 protein lp_1415 from Lactiplantibacillus plantarum (strain ATCC BAA-793 / NCIMB 8826 / WCFS1) (Lactobacillus plantarum).